A 177-amino-acid polypeptide reads, in one-letter code: Peroxiredoxin-2 (177 aa).

An N-acetylalanine modification is found at Ala2. The region spanning 6 to 164 (ARIGKPAPDF…ALRLVQAFQY (159 aa)) is the Thioredoxin domain. Cys51 acts as the Cysteine sulfenic acid (-SOH) intermediate in catalysis. Ser112 bears the Phosphoserine mark.

This sequence belongs to the peroxiredoxin family. AhpC/Prx1 subfamily. In terms of assembly, homodimer; disulfide-linked, upon oxidation. 5 homodimers assemble to form a ring-like decamer. Interacts with TIPIN. In terms of processing, the enzyme can be inactivated by further oxidation of the cysteine sulfenic acid (C(P)-SOH) to sulphinic acid (C(P)-SO2H) instead of its condensation to a disulfide bond. It can be reactivated by forming a transient disulfide bond with sulfiredoxin SRXN1, which reduces the cysteine sulfinic acid in an ATP- and Mg-dependent manner. Acetylation increases resistance to transition to high molecular-mass complexes. Deacetylated by HDAC6 which decreases reducing activity.

It is found in the cytoplasm. The catalysed reaction is a hydroperoxide + [thioredoxin]-dithiol = an alcohol + [thioredoxin]-disulfide + H2O. In terms of biological role, thiol-specific peroxidase that catalyzes the reduction of hydrogen peroxide and organic hydroperoxides to water and alcohols, respectively. Plays a role in cell protection against oxidative stress by detoxifying peroxides and as sensor of hydrogen peroxide-mediated signaling events. Might participate in the signaling cascades of growth factors and tumor necrosis factor-alpha by regulating the intracellular concentrations of H(2)O(2). This Pongo abelii (Sumatran orangutan) protein is Peroxiredoxin-2 (PRDX2).